The sequence spans 424 residues: Arginine ADP-riboxanase OspC4 (424 aa).

11 residues coordinate NAD(+): His85, Gln86, Ser87, Leu91, Ile104, Asn114, Phe130, His148, Phe153, Asp173, and Glu268. Residue Glu268 is part of the active site. ANK repeat units lie at residues 311–340 (MAHQALAYSLGNKKADIALYLLSKFNFTKQ), 355–386 (NLYDVEYLLSKDGANYKVLEYFINNGLVDVNK), and 393–422 (SGDTMLDNAMKSKDSKMIDFFIKKWSGIRQ).

Belongs to the OspC family.

It localises to the secreted. Its subcellular location is the host cytoplasm. It carries out the reaction L-arginyl-[protein] + NAD(+) = ADP-riboxanated L-argininyl-[protein] + nicotinamide + NH4(+) + H(+). Its function is as follows. ADP-riboxanase effector that mediates arginine ADP-riboxanation of host caspase CASP4/CASP11, thereby inhibiting pyroptosis. This is Arginine ADP-riboxanase OspC4 from Shigella flexneri.